The sequence spans 306 residues: Putative dihydroorotate dehydrogenase A (fumarate) (306 aa).

Residues Ser20 and 44–45 (KG) contribute to the FMN site. Substrate-binding positions include Lys44 and 68–72 (NSIGL). FMN is bound by residues Asn98 and Asn126. Asn126 contributes to the substrate binding site. Cys129 acts as the Nucleophile in catalysis. Residues Lys164 and Ile190 each contribute to the FMN site. 191 to 192 (NT) contributes to the substrate binding site. Residues Gly216, 244-245 (GG), and 266-267 (GT) contribute to the FMN site.

Belongs to the dihydroorotate dehydrogenase family. Type 1 subfamily. As to quaternary structure, homodimer. FMN serves as cofactor.

Its subcellular location is the cytoplasm. It catalyses the reaction (S)-dihydroorotate + fumarate = orotate + succinate. It participates in pyrimidine metabolism; UMP biosynthesis via de novo pathway. Functionally, catalyzes the conversion of dihydroorotate to orotate with fumarate as the electron acceptor. The chain is Putative dihydroorotate dehydrogenase A (fumarate) (pyrD) from Aquifex aeolicus (strain VF5).